The chain runs to 265 residues: RWD domain-containing protein 3 (265 aa).

Positions 7-114 (EEVAALSAIY…WTQQNLNNLI (108 aa)) constitute an RWD domain.

Its subcellular location is the nucleus. The protein localises to the cytoplasm. Functionally, enhancer of SUMO conjugation. Increases SUMO conjugation to proteins by promoting the: binding of E1 and E2 enzymes, thioester linkage between SUMO and ube2i/ubc9 and transfer of SUMO to specific target proteins which include hif1a, pias, nfkbia, nr3c1 and top1. Has no effect on ubiquitination. The protein is RWD domain-containing protein 3 (rwdd3) of Xenopus tropicalis (Western clawed frog).